A 338-amino-acid polypeptide reads, in one-letter code: Uroporphyrinogen decarboxylase (338 aa).

Substrate is bound by residues 27-31 (RQAGR), Asp-77, Tyr-151, Ser-203, and His-317.

It belongs to the uroporphyrinogen decarboxylase family. Homodimer.

It is found in the cytoplasm. The enzyme catalyses uroporphyrinogen III + 4 H(+) = coproporphyrinogen III + 4 CO2. It functions in the pathway porphyrin-containing compound metabolism; protoporphyrin-IX biosynthesis; coproporphyrinogen-III from 5-aminolevulinate: step 4/4. Its function is as follows. Catalyzes the decarboxylation of four acetate groups of uroporphyrinogen-III to yield coproporphyrinogen-III. This Wolbachia pipientis wMel protein is Uroporphyrinogen decarboxylase.